We begin with the raw amino-acid sequence, 118 residues long: GRB2-related adapter protein-like (118 aa).

The SH3 domain occupies 1–58 (MESVALYSFQATESDELAFNKGDTLKILNMEDDQNWYKAELRGVEGFIPKNYIRVKPH). The SH2 domain maps to 60 to 118 (WYSGRISRQLAEEILMKRNHLGAFLIRESESSPGEFSVSVNNRAQRGPCLGPKSHSRLG). The disordered stretch occupies residues 89–118 (ESSPGEFSVSVNNRAQRGPCLGPKSHSRLG). Residues 90 to 103 (SSPGEFSVSVNNRA) show a composition bias toward polar residues.

The protein belongs to the GRB2/sem-5/DRK family.

This is GRB2-related adapter protein-like (GRAPL) from Homo sapiens (Human).